A 213-amino-acid polypeptide reads, in one-letter code: Orotate phosphoribosyltransferase (213 aa).

Lys-26 contributes to the 5-phospho-alpha-D-ribose 1-diphosphate binding site. Residue 34-35 (FF) participates in orotate binding. Residues 72–73 (YK), Arg-99, Lys-100, Lys-103, His-105, and 124–132 (DDVITAGTA) contribute to the 5-phospho-alpha-D-ribose 1-diphosphate site. Residues Thr-128 and Arg-156 each contribute to the orotate site.

It belongs to the purine/pyrimidine phosphoribosyltransferase family. PyrE subfamily. Homodimer. Requires Mg(2+) as cofactor.

The catalysed reaction is orotidine 5'-phosphate + diphosphate = orotate + 5-phospho-alpha-D-ribose 1-diphosphate. It functions in the pathway pyrimidine metabolism; UMP biosynthesis via de novo pathway; UMP from orotate: step 1/2. In terms of biological role, catalyzes the transfer of a ribosyl phosphate group from 5-phosphoribose 1-diphosphate to orotate, leading to the formation of orotidine monophosphate (OMP). The sequence is that of Orotate phosphoribosyltransferase from Enterobacter sp. (strain 638).